Consider the following 536-residue polypeptide: Ecdysone receptor (536 aa).

The tract at residues 1-114 (MKTENLIVTT…GPVPRQQEEL (114 aa)) is modulating. Residues 77 to 107 (SPNSKLDDGNMSVHMGDGLDGKKSSSKKGPV) form a disordered region. 2 consecutive NR C4-type zinc fingers follow at residues 115-135 (CLVC…CEGC) and 151-175 (CKFG…LKKC). A DNA-binding region (nuclear receptor) is located at residues 115 to 187 (CLVCGDRASG…VGMRPECVVP (73 aa)). The 237-residue stretch at 278–514 (NQVAVIYKLI…FLEEVWDVGD (237 aa)) folds into the NR LBD domain.

It belongs to the nuclear hormone receptor family. NR1 subfamily.

It is found in the nucleus. Its function is as follows. Receptor for ecdysone. Binds to ecdysone response elements (ECRES). The protein is Ecdysone receptor (EcR) of Chironomus tentans (Midge).